The following is a 232-amino-acid chain: Dehydrogenase OXI1 (232 aa).

The signal sequence occupies residues 1 to 20 (MTETFKVAITFVSPSSEALA). Leu-19 serves as a coordination point for NADP(+). A glycan (N-linked (GlcNAc...) asparagine) is linked at Asn-28. Residues Asp-42, Asn-70, and Lys-103 each coordinate NADP(+). The N-linked (GlcNAc...) asparagine glycan is linked to Asn-117. Active-site proton donor residues include Ser-119 and Ser-121. Residues Tyr-133, Lys-137, and Thr-168 each coordinate NADP(+). Catalysis depends on Tyr-133, which acts as the Proton acceptor. The active-site Lowers pKa of active site Tyr is Lys-137.

The protein belongs to the short-chain dehydrogenases/reductases (SDR) family.

The enzyme catalyses a primary alcohol + NAD(+) = an aldehyde + NADH + H(+). The catalysed reaction is a secondary alcohol + NAD(+) = a ketone + NADH + H(+). It functions in the pathway mycotoxin biosynthesis. Functionally, dehydrogenase; part of the Tox1A locus, one of the 2 loci that mediate the biosynthesis of T-toxin, a family of linear polyketides 37 to 45 carbons in length, of which the major component is 41 carbons, and which leads to high virulence to maize. One of the PKSs (PKS1 or PKS2) could synthesize a precursor, used subsequently by the other PKS as starter unit, to add additional carbons. Variability in the length of the final carbon backbone C35-47 could be achieved by varying the number of condensation cycles, or use of different starter or extender units or might be due to decarboxylation of the penultimate product, catalyzed by DEC1. Additional proteins are required for the biosynthesis of T-toxin, including oxidoreductases RED1, RED2, RED3, LAM1 and OXI1, as well as esterase TOX9. This is Dehydrogenase OXI1 from Cochliobolus heterostrophus (strain C4 / ATCC 48331 / race T) (Southern corn leaf blight fungus).